We begin with the raw amino-acid sequence, 310 residues long: Transcription initiation factor TFIID subunit 8 (310 aa).

The disordered stretch occupies residues 1–30; sequence MADAAATAGAGGSGTRSGSKQSTNPADNYH. N-acetylalanine is present on Ala2. The Histone-fold; involved in forming hexamer structure in TFIID complex domain occupies 35–102; the sequence is RTLQVVVSSL…IVVTLVEMGF (68 aa). Thr130 carries the phosphothreonine modification. Positions 262-310 are disordered; sequence DSGAEKENTSVLQQNPSLSGSRNGEENIIDNPYLRPVKKPKIRRKKSLS. Residues 270-283 show a composition bias toward polar residues; the sequence is TSVLQQNPSLSGSR. The residue at position 271 (Ser271) is a Phosphoserine. A Nuclear localization signal motif is present at residues 294 to 307; it reads YLRPVKKPKIRRKK. The span at 297–310 shows a compositional bias: basic residues; it reads PVKKPKIRRKKSLS.

It belongs to the TAF8 family. In terms of assembly, component of the TFIID basal transcription factor complex, composed of TATA-box-binding protein TBP, and a number of TBP-associated factors (TAFs), including TAF1, TAF2, TAF3, TAF4, TAF5, TAF6, TAF7, TAF8, TAF9, TAF10, TAF11, TAF12 and TAF13. Interacts with TBP, TAF1, TAF6, TAF10, TAF11 and TAF13. Component also of a small TAF complex (SMAT) containing TAF8, TAF10 and SUPT7L. Forms a heterodimer with TAF10. Interaction with TAF10 is mediated mainly via its histone fold domain while interaction with SUPT7L is via its C-terminal region.

Its subcellular location is the nucleus. The protein resides in the cytoplasm. Its function is as follows. The TFIID basal transcription factor complex plays a major role in the initiation of RNA polymerase II (Pol II)-dependent transcription. TFIID recognizes and binds promoters with or without a TATA box via its subunit TBP, a TATA-box-binding protein, and promotes assembly of the pre-initiation complex (PIC). The TFIID complex consists of TBP and TBP-associated factors (TAFs), including TAF1, TAF2, TAF3, TAF4, TAF5, TAF6, TAF7, TAF8, TAF9, TAF10, TAF11, TAF12 and TAF13. The TFIID complex structure can be divided into 3 modules TFIID-A, TFIID-B, and TFIID-C. TAF8 is involved in forming the TFIID-B module, together with TAF5. Mediates both basal and activator-dependent transcription. Plays a role in the differentiation of preadipocyte fibroblasts to adipocytes, however, does not seem to play a role in differentiation of myoblasts. Required for the integration of TAF10 in the TAF complex. May be important for survival of cells of the inner cell mass which constitute the pluripotent cell population of the early embryo. In Homo sapiens (Human), this protein is Transcription initiation factor TFIID subunit 8 (TAF8).